The primary structure comprises 113 residues: UPF0482 protein YnfB (113 aa).

Residues M1–A28 form the signal peptide.

This sequence belongs to the UPF0482 family.

The polypeptide is UPF0482 protein YnfB (Escherichia coli O157:H7).